Here is a 556-residue protein sequence, read N- to C-terminus: Arginine--tRNA ligase (556 aa).

Positions 133-143 match the 'HIGH' region motif; the sequence is ANPTGPIHIGH.

It belongs to the class-I aminoacyl-tRNA synthetase family. Monomer.

It localises to the cytoplasm. It carries out the reaction tRNA(Arg) + L-arginine + ATP = L-arginyl-tRNA(Arg) + AMP + diphosphate. In Dehalococcoides mccartyi (strain ATCC BAA-2100 / JCM 16839 / KCTC 5957 / BAV1), this protein is Arginine--tRNA ligase.